A 195-amino-acid polypeptide reads, in one-letter code: Imidazoleglycerol-phosphate dehydratase (195 aa).

It belongs to the imidazoleglycerol-phosphate dehydratase family.

It is found in the cytoplasm. The catalysed reaction is D-erythro-1-(imidazol-4-yl)glycerol 3-phosphate = 3-(imidazol-4-yl)-2-oxopropyl phosphate + H2O. Its pathway is amino-acid biosynthesis; L-histidine biosynthesis; L-histidine from 5-phospho-alpha-D-ribose 1-diphosphate: step 6/9. The polypeptide is Imidazoleglycerol-phosphate dehydratase (Burkholderia thailandensis (strain ATCC 700388 / DSM 13276 / CCUG 48851 / CIP 106301 / E264)).